A 77-amino-acid chain; its full sequence is MKLSVKFLLFLMILPLIAGEDMSDNDAPKSVDVQRNVKRQGQSQFGEQCTGHLDCFGDLCCFDGYCIMTSWIWPCNW.

Positions Met1–Gly19 are cleaved as a signal peptide. The propeptide occupies Glu20–Val37. Disulfide bonds link Cys49/Cys61, Cys55/Cys66, and Cys60/Cys75.

This sequence belongs to the conotoxin I1 superfamily. In terms of tissue distribution, expressed by the venom duct.

The protein resides in the secreted. In Californiconus californicus (California cone), this protein is Conotoxin Cl6.15.